Reading from the N-terminus, the 974-residue chain is Bifunctional glutamine synthetase adenylyltransferase/adenylyl-removing enzyme (974 aa).

An adenylyl removase region spans residues 1 to 464 (MKNAFLKTQL…HYAALFENEQ (464 aa)). An adenylyl transferase region spans residues 468-974 (LEIGNLVFTG…YSIFKQVMKY (507 aa)).

It belongs to the GlnE family. Mg(2+) serves as cofactor.

It catalyses the reaction [glutamine synthetase]-O(4)-(5'-adenylyl)-L-tyrosine + phosphate = [glutamine synthetase]-L-tyrosine + ADP. The enzyme catalyses [glutamine synthetase]-L-tyrosine + ATP = [glutamine synthetase]-O(4)-(5'-adenylyl)-L-tyrosine + diphosphate. Its function is as follows. Involved in the regulation of glutamine synthetase GlnA, a key enzyme in the process to assimilate ammonia. When cellular nitrogen levels are high, the C-terminal adenylyl transferase (AT) inactivates GlnA by covalent transfer of an adenylyl group from ATP to specific tyrosine residue of GlnA, thus reducing its activity. Conversely, when nitrogen levels are low, the N-terminal adenylyl removase (AR) activates GlnA by removing the adenylyl group by phosphorolysis, increasing its activity. The regulatory region of GlnE binds the signal transduction protein PII (GlnB) which indicates the nitrogen status of the cell. The polypeptide is Bifunctional glutamine synthetase adenylyltransferase/adenylyl-removing enzyme (Bartonella henselae (strain ATCC 49882 / DSM 28221 / CCUG 30454 / Houston 1) (Rochalimaea henselae)).